The chain runs to 284 residues: MDFIRAIILGVIEGITEWLPISSTGHLIIADEFIRLNQSAAFKEMFDVVIQLGAILSVVVLYFHKLNPFNKLNPADKQKTPREIQLTWRLWLKVLIAALPAAIIGLPLNDWLDKHFYHFVPVAFMLIIYGVAFIVIERRWVPNHEFSVMNIDRLPYRAALYIGLFQVLSLLPGTSRSGATIVGALLVGVSREVAAEFTFFLGIPVMFGASFIKILHFFKNGNSLSFEQFGVLLVACIVAFGVSMVAIKFLTDYVKKHDFTFFGKYRIVLGIILLIYAMFRAFLG.

8 helical membrane-spanning segments follow: residues 7–27 (IILGVIEGITEWLPISSTGHL), 44–64 (EMFDVVIQLGAILSVVVLYFH), 90–110 (LWLKVLIAALPAAIIGLPLND), 116–136 (FYHFVPVAFMLIIYGVAFIVI), 167–187 (VLSLLPGTSRSGATIVGALLV), 197–217 (FTFFLGIPVMFGASFIKILHF), 229–249 (FGVLLVACIVAFGVSMVAIKF), and 259–279 (FTFFGKYRIVLGIILLIYAMF).

Belongs to the UppP family.

It localises to the cell membrane. The enzyme catalyses di-trans,octa-cis-undecaprenyl diphosphate + H2O = di-trans,octa-cis-undecaprenyl phosphate + phosphate + H(+). Functionally, catalyzes the dephosphorylation of undecaprenyl diphosphate (UPP). Confers resistance to bacitracin. The polypeptide is Undecaprenyl-diphosphatase (Lactococcus lactis subsp. lactis (strain IL1403) (Streptococcus lactis)).